A 120-amino-acid chain; its full sequence is Ribonuclease P protein component 2 (120 aa).

The protein belongs to the eukaryotic/archaeal RNase P protein component 2 family. Consists of a catalytic RNA component and at least 4-5 protein subunits. Forms a subcomplex with Rnp3 which stimulates the catalytic RNA.

It localises to the cytoplasm. It carries out the reaction Endonucleolytic cleavage of RNA, removing 5'-extranucleotides from tRNA precursor.. Part of ribonuclease P, a protein complex that generates mature tRNA molecules by cleaving their 5'-ends. The RNA is catalytic, but its KM for pre-tRNA is 170-fold decreased in the presence of the 4 known protein subunits (Rnp1-4). The protein subunits also decrease the amount of Mg(2+) needed for activity. This chain is Ribonuclease P protein component 2, found in Pyrococcus furiosus (strain ATCC 43587 / DSM 3638 / JCM 8422 / Vc1).